A 611-amino-acid polypeptide reads, in one-letter code: DNA mismatch repair protein MutL (611 aa).

It belongs to the DNA mismatch repair MutL/HexB family.

In terms of biological role, this protein is involved in the repair of mismatches in DNA. It is required for dam-dependent methyl-directed DNA mismatch repair. May act as a 'molecular matchmaker', a protein that promotes the formation of a stable complex between two or more DNA-binding proteins in an ATP-dependent manner without itself being part of a final effector complex. In Rickettsia bellii (strain RML369-C), this protein is DNA mismatch repair protein MutL.